Here is a 311-residue protein sequence, read N- to C-terminus: Cathepsin B (311 aa).

An N-terminal signal peptide occupies residues 1–19 (MRVLLSLVVILFIINSAFA). Positions 20-78 (VKINIGRPTKSHKTIHHETWVEEQTDQFDNIKVGQLLGFKRSPNRPKLQIKSYDPLGVQ) are excised as a propeptide. A glycan (N-linked (GlcNAc...) asparagine) is linked at N91. 5 disulfide bridges follow: C92/C121, C104/C145, C138/C191, C167/C195, and C175/C182. Residue C107 is part of the active site. The N-linked (GlcNAc...) asparagine glycan is linked to N198. Residues H261 and N281 contribute to the active site. Residue N290 is glycosylated (N-linked (GlcNAc...) asparagine).

The protein belongs to the peptidase C1 family.

The protein localises to the lysosome. The catalysed reaction is Hydrolysis of proteins with broad specificity for peptide bonds. Preferentially cleaves -Arg-Arg-|-Xaa bonds in small molecule substrates (thus differing from cathepsin L). In addition to being an endopeptidase, shows peptidyl-dipeptidase activity, liberating C-terminal dipeptides.. Functionally, thiol protease which is believed to participate in intracellular degradation and turnover of proteins. The polypeptide is Cathepsin B (ctsB) (Dictyostelium discoideum (Social amoeba)).